The primary structure comprises 327 residues: D-alanine--D-alanine ligase (327 aa).

Residues 113–312 (KRLWMTHGLA…YEDFVLQVLA (200 aa)) form the ATP-grasp domain. 139-194 (VADLGLPLIVKPAREGSSIGLTKVTAADQMRAAFDKAAALDNDVIAETFVDGAELT) is a binding site for ATP. Positions 266, 279, and 281 each coordinate Mg(2+).

This sequence belongs to the D-alanine--D-alanine ligase family. Mg(2+) serves as cofactor. Mn(2+) is required as a cofactor.

The protein resides in the cytoplasm. It carries out the reaction 2 D-alanine + ATP = D-alanyl-D-alanine + ADP + phosphate + H(+). Its pathway is cell wall biogenesis; peptidoglycan biosynthesis. In terms of biological role, cell wall formation. The sequence is that of D-alanine--D-alanine ligase from Cupriavidus taiwanensis (strain DSM 17343 / BCRC 17206 / CCUG 44338 / CIP 107171 / LMG 19424 / R1) (Ralstonia taiwanensis (strain LMG 19424)).